A 1088-amino-acid chain; its full sequence is Methionine S-methyltransferase (1088 aa).

Belongs to the class I-like SAM-binding methyltransferase superfamily. In terms of assembly, homotetramer. As to expression, expressed in the shoot, scutellum, and aleurone cells but not in the root or endosperm.

The protein localises to the cytoplasm. It catalyses the reaction L-methionine + S-adenosyl-L-methionine = S-methyl-L-methionine + S-adenosyl-L-homocysteine. Functionally, catalyzes the S-methylmethionine (SMM) biosynthesis from adenosyl-L-homocysteine (AdoMet) and methionine. SMM biosynthesis (by MMT1) and degradation (by HMT-1, HMT-2 and HMT-3) constitute the SMM cycle in plants, which is probably required to achieve short term control of AdoMet level. Also able to catalyze the selenium-methylmethionine (SeMM) from AdoMet and selenium-methionine (SeMet). May play a role in phoem sulfur transport; such function is however not essential. This is Methionine S-methyltransferase (MMT1) from Hordeum vulgare (Barley).